Consider the following 592-residue polypeptide: Prospero homeobox protein 2 (592 aa).

Disordered regions lie at residues 20-56 (EACTEGERSSSPPELDRDSPFPWSQVPSSSPTDPEWF), 85-129 (GNAQ…RKGG), 155-218 (KPRD…LPSG), 308-336 (RLDSPRYPIPPRMTPKPCQDPPANFPLTA), and 353-382 (RYNNGHWSSSPPQDSSSQRHPSSEPALRPW). A compositionally biased stretch (basic residues) spans 95–106 (CPKKARERKRKQ). Positions 201–211 (SGAEKHQESEK) are enriched in basic and acidic residues. The segment covering 314 to 331 (YPIPPRMTPKPCQDPPAN) has biased composition (pro residues). Over residues 360–377 (SSSPPQDSSSQRHPSSEP) the composition is skewed to low complexity. In terms of domain architecture, Prospero-type homeo spans 437–495 (QEGLNPGHLKKAKLMFFFTRYPSSNLLKVYFPDVQFNRCITSQMIKWFSNFREFYYIQM). A homeo-Prospero region spans residues 437–592 (QEGLNPGHLK…EIFKSSSYPQ (156 aa)). Residues 496-592 (EKSARQAISD…EIFKSSSYPQ (97 aa)) enclose the Prospero domain.

It belongs to the Prospero homeodomain family.

The protein localises to the nucleus. Transcription regulator. Does not seem to be essential for embryonic development and postnatal survival. This is Prospero homeobox protein 2 (PROX2) from Homo sapiens (Human).